We begin with the raw amino-acid sequence, 115 residues long: Glutaredoxin-like protein C5orf63 homolog (115 aa).

Cys40 and Cys43 are oxidised to a cystine.

It belongs to the glutaredoxin family. YDR286C subfamily.

The polypeptide is Glutaredoxin-like protein C5orf63 homolog (Mus musculus (Mouse)).